A 131-amino-acid chain; its full sequence is Small ribosomal subunit protein uS8 (131 aa).

The protein belongs to the universal ribosomal protein uS8 family. In terms of assembly, part of the 30S ribosomal subunit. Contacts proteins S5 and S12.

One of the primary rRNA binding proteins, it binds directly to 16S rRNA central domain where it helps coordinate assembly of the platform of the 30S subunit. The protein is Small ribosomal subunit protein uS8 of Paraburkholderia xenovorans (strain LB400).